Here is a 634-residue protein sequence, read N- to C-terminus: tRNA uridine 5-carboxymethylaminomethyl modification enzyme MnmG (634 aa).

FAD is bound at residue 14 to 19; sequence GGGHAG. An NAD(+)-binding site is contributed by 279–293; sequence GPRYCPSIEDKVVRF.

It belongs to the MnmG family. In terms of assembly, homodimer. Heterotetramer of two MnmE and two MnmG subunits. FAD is required as a cofactor.

The protein resides in the cytoplasm. In terms of biological role, NAD-binding protein involved in the addition of a carboxymethylaminomethyl (cmnm) group at the wobble position (U34) of certain tRNAs, forming tRNA-cmnm(5)s(2)U34. This is tRNA uridine 5-carboxymethylaminomethyl modification enzyme MnmG from Xanthomonas campestris pv. campestris (strain 8004).